The following is a 161-amino-acid chain: ATP synthase subunit b' (161 aa).

The helical transmembrane segment at 26–45 (LPLMAIQFLLLAFVLDKIFY) threads the bilayer.

Belongs to the ATPase B chain family. F-type ATPases have 2 components, F(1) - the catalytic core - and F(0) - the membrane proton channel. F(1) has five subunits: alpha(3), beta(3), gamma(1), delta(1), epsilon(1). F(0) has four main subunits: a(1), b(1), b'(1) and c(10-14). The alpha and beta chains form an alternating ring which encloses part of the gamma chain. F(1) is attached to F(0) by a central stalk formed by the gamma and epsilon chains, while a peripheral stalk is formed by the delta, b and b' chains.

The protein localises to the cellular thylakoid membrane. F(1)F(0) ATP synthase produces ATP from ADP in the presence of a proton or sodium gradient. F-type ATPases consist of two structural domains, F(1) containing the extramembraneous catalytic core and F(0) containing the membrane proton channel, linked together by a central stalk and a peripheral stalk. During catalysis, ATP synthesis in the catalytic domain of F(1) is coupled via a rotary mechanism of the central stalk subunits to proton translocation. In terms of biological role, component of the F(0) channel, it forms part of the peripheral stalk, linking F(1) to F(0). The b'-subunit is a diverged and duplicated form of b found in plants and photosynthetic bacteria. The protein is ATP synthase subunit b' of Trichodesmium erythraeum (strain IMS101).